A 359-amino-acid chain; its full sequence is Peptide chain release factor 1 (359 aa).

Position 235 is an N5-methylglutamine (Gln-235).

This sequence belongs to the prokaryotic/mitochondrial release factor family. Post-translationally, methylated by PrmC. Methylation increases the termination efficiency of RF1.

The protein localises to the cytoplasm. In terms of biological role, peptide chain release factor 1 directs the termination of translation in response to the peptide chain termination codons UAG and UAA. The polypeptide is Peptide chain release factor 1 (Aromatoleum aromaticum (strain DSM 19018 / LMG 30748 / EbN1) (Azoarcus sp. (strain EbN1))).